Consider the following 260-residue polypeptide: MTILEEIVEYKQLLLQNGYYQDKLNTLKSVNIQNKKSFINAIEKEPKLAIIAEIKSKSPTVNDLPERDLSQQISDYEQYGANAVSILTDEKYFGGSFERLQALTTKTTLPVLCKDFIIDPLQIDVAKQAGASMILLIVNILSDKQLKDLYNYAISQNLEVLVEVHDRHELERAYKVNAKLIGVNNRDLKRFVTNVEHTNTILENKKPNHYYISESGIHDVSDVRKILHSGIDGLLIGEALMRCDNLSEFLPQLKMQKVKS.

The protein belongs to the TrpC family.

It carries out the reaction 1-(2-carboxyphenylamino)-1-deoxy-D-ribulose 5-phosphate + H(+) = (1S,2R)-1-C-(indol-3-yl)glycerol 3-phosphate + CO2 + H2O. It functions in the pathway amino-acid biosynthesis; L-tryptophan biosynthesis; L-tryptophan from chorismate: step 4/5. The sequence is that of Indole-3-glycerol phosphate synthase from Staphylococcus aureus (strain MRSA252).